A 205-amino-acid polypeptide reads, in one-letter code: Anaerobic dimethyl sulfoxide reductase chain B (205 aa).

4Fe-4S ferredoxin-type domains are found at residues 5–33 (YGFF…LTPE), 59–89 (FAYY…KRED), and 90–119 (GFVV…YNET). [4Fe-4S] cluster contacts are provided by C14, C17, C20, C24, C67, C70, C75, C79, C99, C102, C105, C109, C126, C129, C141, and C145. A disordered region spans residues 184–205 (KPNANSRPTGDTTGYLANPKEV). Residues 186-195 (NANSRPTGDT) are compositionally biased toward polar residues.

In terms of assembly, heterotrimeric enzyme composed of a catalytic heterodimer (DmsAB) and a membrane anchor protein (DmsC). Requires [4Fe-4S] cluster as cofactor.

Electron transfer subunit of the terminal reductase during anaerobic growth on various sulfoxide and N-oxide compounds. This is Anaerobic dimethyl sulfoxide reductase chain B (dmsB) from Shigella flexneri.